A 319-amino-acid polypeptide reads, in one-letter code: NAP1-binding protein (319 aa).

Positions 34–43 (SALRSRRKQM) are enriched in basic residues. The interval 34 to 74 (SALRSRRKQMRPTGKSVLKRPRKVTDRKTEEKIRTNRRKTP) is disordered. Residues 56-67 (KVTDRKTEEKIR) show a composition bias toward basic and acidic residues. A phosphoserine mark is found at serine 251 and serine 260. The interval 278–319 (EMQPLQENISPACPTPPYRSRETEKEDETLSPISVDFSSYLS) is disordered.

In terms of assembly, interacts with NDC1 and MPS2.

The sequence is that of NAP1-binding protein (NBP1) from Saccharomyces cerevisiae (strain ATCC 204508 / S288c) (Baker's yeast).